Reading from the N-terminus, the 319-residue chain is Ribose-phosphate pyrophosphokinase (319 aa).

ATP is bound by residues 40–42 and 99–100; these read DGE and RQ. Mg(2+) is bound by residues H134 and D174. K198 is an active-site residue. D-ribose 5-phosphate-binding positions include R200, D224, and 228–232; that span reads DTAGT.

Belongs to the ribose-phosphate pyrophosphokinase family. Class I subfamily. Homohexamer. The cofactor is Mg(2+).

Its subcellular location is the cytoplasm. It carries out the reaction D-ribose 5-phosphate + ATP = 5-phospho-alpha-D-ribose 1-diphosphate + AMP + H(+). Its pathway is metabolic intermediate biosynthesis; 5-phospho-alpha-D-ribose 1-diphosphate biosynthesis; 5-phospho-alpha-D-ribose 1-diphosphate from D-ribose 5-phosphate (route I): step 1/1. Its function is as follows. Involved in the biosynthesis of the central metabolite phospho-alpha-D-ribosyl-1-pyrophosphate (PRPP) via the transfer of pyrophosphoryl group from ATP to 1-hydroxyl of ribose-5-phosphate (Rib-5-P). In Coxiella burnetii (strain RSA 493 / Nine Mile phase I), this protein is Ribose-phosphate pyrophosphokinase.